A 460-amino-acid chain; its full sequence is 2-methylcitrate synthase, mitochondrial (460 aa).

The transit peptide at 1 to 24 (MALPLRTARHASRLAQTIGRRGYA) directs the protein to the mitochondrion. The CoA site is built by Arg69 and Lys187. Residue His264 participates in oxaloacetate binding. Position 299 (Leu299) interacts with CoA. His300 is an active-site residue. CoA-binding residues include Val341, Gly343, and Tyr344. Positions 346 and 355 each coordinate oxaloacetate. His346 is an active-site residue. Residues Thr395, Lys396, and Asn401 each contribute to the CoA site. The active site involves Asp403. Oxaloacetate-binding residues include Arg429 and Arg449.

The protein belongs to the citrate synthase family. In terms of assembly, homodimer.

The protein resides in the mitochondrion matrix. It carries out the reaction propanoyl-CoA + oxaloacetate + H2O = (2S,3S)-2-methylcitrate + CoA + H(+). The catalysed reaction is oxaloacetate + acetyl-CoA + H2O = citrate + CoA + H(+). The protein operates within organic acid metabolism; propanoate degradation. Its activity is regulated as follows. Partially inhibited by ATP. Functionally, catalyzes the synthesis of (2S,3S)-2-methylcitrate from propionyl-CoA and oxaloacetate and also from acetyl-CoA and oxaloacetate with a greater efficiency. Also has citrate synthase activity and can substitute for the loss of citA activity. The sequence is that of 2-methylcitrate synthase, mitochondrial from Emericella nidulans (strain FGSC A4 / ATCC 38163 / CBS 112.46 / NRRL 194 / M139) (Aspergillus nidulans).